Consider the following 576-residue polypeptide: MSTLASTRPPPLKLTIPSLEEAEDHAQERRAGGGGQEVGKMHPDCLPLPLVQPGNSPQVREEEEDEQTECEEQLNIEDEEVEEEHDLDLEDPASCCSENSVLSVGQEQSEAAQAALSAQAQARQRLLISQIYRPSAFSSTATTVLPPSEGPPFSPEDLLQLPPSTGTFQEEFLRKSQLYAEELMKQQMHLMAAARVNALTAAAAGKQLQMAMAAAAVATVPSGQDALAQLTATALGLGPGGAVHPHQQLLLQRDQVHHHHHMQNHLNNNENLHERALKFSIDNILKADFGSRLPKIGALSGNIGGGSVSGSSTGSSKNSGNTNGNRSPLKAPKKSGKPLNLAQSNAAANSSLSFSSSLANICSNSNDSNSTATSSSTTNTSGAPVDLVKSPPPAAGAGATGASGKSGEDSGTPIVWPAWVYCTRYSDRPSSGRSPRARKPKKPATSSSAAGGGGGGVEKGEAADGGGVPEDKRPRTAFSGTQLARLKHEFNENRYLTEKRRQQLSGELGLNEAQIKIWFQNKRAKLKKSSGTKNPLALQLMAQGLYNHSTIPLTREEEELQELQEAASAAAAKEPC.

5 disordered regions span residues 1–68, 80–102, 305–344, 364–410, and 426–476; these read MSTL…DEQT, EVEEEHDLDLEDPASCCSENSVL, GGSVSGSSTGSSKNSGNTNGNRSPLKAPKKSGKPLNLAQS, NSND…GEDS, and SDRP…RPRT. Over residues 80–91 the composition is skewed to acidic residues; that stretch reads EVEEEHDLDLED. Composition is skewed to low complexity over residues 309-325, 364-381, and 395-405; these read SGSSTGSSKNSGNTNGN, NSNDSNSTATSSSTTNTS, and AGAGATGASGK. The span at 450–468 shows a compositional bias: gly residues; sequence AGGGGGGVEKGEAADGGGV. The homeobox DNA-binding region spans 471 to 530; the sequence is DKRPRTAFSGTQLARLKHEFNENRYLTEKRRQQLSGELGLNEAQIKIWFQNKRAKLKKSS.

Belongs to the engrailed homeobox family. In terms of tissue distribution, expressed in row 6/7 of the embryonic neuroectoderm.

Its subcellular location is the nucleus. In terms of biological role, engrailed (en) and invected (inv) are functionally redundant transcription factors in neuronal precursor cell NB5-3 specification. Inv is unable to substitute for en in other regulatory processes such as maintaining gsb expression in the neuroectoderm after stage 10 of embryogenesis. Maintenance of gsb expression in row 5 of the neuroectoderm involves an as yet unidentified short range signaling molecule. This chain is Homeobox protein invected (inv), found in Drosophila melanogaster (Fruit fly).